We begin with the raw amino-acid sequence, 704 residues long: MAQDVLTDLNKVRNIGIMAHIDAGKTTTTERILFYTGVNHKIGETHDGASTTDWMEQEKERGITITSAAVTCFWDKNQINIIDTPGHVDFTVEVERSLRVLDGAVAVFDGKEGVEPQSETVWRQADKYNVPRICFVNKMDKLGADFYFTVDTIISRLGAKPLVMQLPIGAENDFIGVVDLLEMRALVWPGDAKGDVTMGASYEVQEIPADLQAKAEEYRAQLVETVAEASEELMEKYLEGEELTLEEIKAGIRKMTINSELYPVFCGSAFKNRGVQPMLDAVVDFLPNPLDVPPMIGHDPRDEEKELTRKPSADEPFSALAFKIAAHPFFGQLTFVRVYSGHVEAGAQVVNSTKGKKERIGKLFQMHANKEMPVEGATAGHIYAAIGLKDTTTGDTLCDANNQIVLESMSFPEPVISVAIEPNTKGDQEKLSTAIQKLSAEDPTFQVSLNEDTGQTIIAGMGELHLDILVDRMRREFKVEANVGKPQVAYRETIKRAVERLDYTHKKQTGGSGQFAKIQIAIEPMDTASGELYAFENKVTGGRVPREYIPSVDAGIQDALNDGVLAGYPVVGIKATLIDGASHDVDSSEMAFKIAGRMAFKEAARKANPVLLEPLMDVEVRTPEEYMGDVIGDLNARRGQMQSMEDAAGVKVIRAHVPLSGMFGYIGDLRSKTQGRAVYSMTFNSYAEVPKAVADEIIQKTRGE.

Residues 10 to 290 (NKVRNIGIMA…AVVDFLPNPL (281 aa)) enclose the tr-type G domain. GTP contacts are provided by residues 19 to 26 (AHIDAGKT), 83 to 87 (DTPGH), and 137 to 140 (NKMD).

Belongs to the TRAFAC class translation factor GTPase superfamily. Classic translation factor GTPase family. EF-G/EF-2 subfamily.

The protein resides in the cytoplasm. Its function is as follows. Catalyzes the GTP-dependent ribosomal translocation step during translation elongation. During this step, the ribosome changes from the pre-translocational (PRE) to the post-translocational (POST) state as the newly formed A-site-bound peptidyl-tRNA and P-site-bound deacylated tRNA move to the P and E sites, respectively. Catalyzes the coordinated movement of the two tRNA molecules, the mRNA and conformational changes in the ribosome. This Paenarthrobacter aurescens (strain TC1) protein is Elongation factor G.